Consider the following 96-residue polypeptide: MKFSLISVFLFAVFLSNENIFQAIADNRYLPTIFKNPVNAEQRSEAVMSSSLTNEEESRNWPHRATRNTLEKGQKRSPAARSEIEEMEEYDDRWMW.

The signal sequence occupies residues 1 to 25; sequence MKFSLISVFLFAVFLSNENIFQAIA. Positions 45–84 are disordered; that stretch reads EAVMSSSLTNEEESRNWPHRATRNTLEKGQKRSPAARSEI.

The protein belongs to the non-disulfide-bridged peptide (NDBP) superfamily. Expressed by the venom gland.

It is found in the secreted. The chain is Venom protein 3.1 from Lychas mucronatus (Chinese swimming scorpion).